Here is a 489-residue protein sequence, read N- to C-terminus: L-arabinose isomerase (489 aa).

Residues Glu300, Glu325, His342, and His441 each contribute to the Mn(2+) site.

It belongs to the arabinose isomerase family. Requires Mn(2+) as cofactor.

It carries out the reaction beta-L-arabinopyranose = L-ribulose. Its pathway is carbohydrate degradation; L-arabinose degradation via L-ribulose; D-xylulose 5-phosphate from L-arabinose (bacterial route): step 1/3. Its function is as follows. Catalyzes the conversion of L-arabinose to L-ribulose. The protein is L-arabinose isomerase of Clostridium beijerinckii (strain ATCC 51743 / NCIMB 8052) (Clostridium acetobutylicum).